Consider the following 117-residue polypeptide: G antigen 12B/C/D/E (117 aa).

Positions 1–117 are disordered; sequence MSWRGRSTYY…PEEGEKQSQC (117 aa). Composition is skewed to acidic residues over residues 32-45 and 87-96; these read FSDE…EEGE and ECEDGPDGQE. Positions 103 to 117 are enriched in basic and acidic residues; that stretch reads EEVKTPEEGEKQSQC.

This sequence belongs to the GAGE family.

In Homo sapiens (Human), this protein is G antigen 12B/C/D/E (GAGE12B).